The primary structure comprises 297 residues: MAVLFLLLFLCGTPQAADNMQAIYVALGEAVELPCPSPPTLHGDEHLSWFCSPAAGSFTTLVAQVQVGRPAPDPGKPGRESRLRLLGNYSLWLEGSKEEDAGRYWCAVLGQHHNYQNWRVYDVLVLKGSQLSARAADGSPCNVLLCSVVPSRRMDSVTWQEGKGPVRGRVQSFWGSEAALLLVCPGEGLSEPRSRRPRIIRCLMTHNKGVSFSLAASIDASPALCAPSTGWDMPWILMLLLTMGQGVVILALSIVLWRQRVRGAPGRDASIPQFKPEIQVYENIHLARLGPPAHKPR.

The signal sequence occupies residues 1-16; that stretch reads MAVLFLLLFLCGTPQA. In terms of domain architecture, Ig-like V-type spans 17–122; sequence ADNMQAIYVA…HNYQNWRVYD (106 aa). At 17-235 the chain is on the extracellular side; sequence ADNMQAIYVA…APSTGWDMPW (219 aa). Residues C35 and C106 are joined by a disulfide bond. A glycan (N-linked (GlcNAc...) asparagine) is linked at N88. The chain crosses the membrane as a helical span at residues 236–256; sequence ILMLLLTMGQGVVILALSIVL. The Cytoplasmic segment spans residues 257-297; the sequence is WRQRVRGAPGRDASIPQFKPEIQVYENIHLARLGPPAHKPR. Y281 carries the phosphotyrosine modification.

As to quaternary structure, homodimer; disulfide-linked. Interacts with GRB2 and GRB7 in a phosphorylation-dependent manner. In terms of processing, N-glycosylated.

Its subcellular location is the cell membrane. In terms of biological role, may play a role in the downstream signal transduction pathways involving GRB2 and GRB7. The polypeptide is Lymphocyte antigen 6 complex locus protein G6f (LY6G6F) (Homo sapiens (Human)).